The following is a 226-amino-acid chain: ATP-dependent dethiobiotin synthetase BioD (226 aa).

Residue 14–19 (GIGKTF) coordinates ATP. Thr18 is a binding site for Mg(2+). Lys39 is an active-site residue. Ser43 provides a ligand contact to substrate. ATP contacts are provided by residues Asp56, 117–120 (EGVG), 177–178 (NT), 206–208 (PHI), and Asn213. Mg(2+) is bound by residues Asp56 and Glu117.

This sequence belongs to the dethiobiotin synthetase family. As to quaternary structure, homodimer. It depends on Mg(2+) as a cofactor.

The protein resides in the cytoplasm. It carries out the reaction (7R,8S)-7,8-diammoniononanoate + CO2 + ATP = (4R,5S)-dethiobiotin + ADP + phosphate + 3 H(+). The protein operates within cofactor biosynthesis; biotin biosynthesis; biotin from 7,8-diaminononanoate: step 1/2. In terms of biological role, catalyzes a mechanistically unusual reaction, the ATP-dependent insertion of CO2 between the N7 and N8 nitrogen atoms of 7,8-diaminopelargonic acid (DAPA, also called 7,8-diammoniononanoate) to form a ureido ring. The sequence is that of ATP-dependent dethiobiotin synthetase BioD from Xylella fastidiosa (strain M12).